Consider the following 138-residue polypeptide: Small ribosomal subunit protein uS11c (138 aa).

The disordered stretch occupies residues 1 to 25; it reads MAKSIPRTGSRRNVRSGSRKSTRRI. Basic residues predominate over residues 9–25; it reads GSRRNVRSGSRKSTRRI.

The protein belongs to the universal ribosomal protein uS11 family. In terms of assembly, part of the 30S ribosomal subunit.

The protein localises to the plastid. Its subcellular location is the chloroplast. This chain is Small ribosomal subunit protein uS11c, found in Eucalyptus globulus subsp. globulus (Tasmanian blue gum).